The sequence spans 604 residues: Cell division cycle protein CDT1 (604 aa).

Belongs to the Cdt1 family. In terms of assembly, associates with the MCM2-7 complex. Interacts with MCM2, ORC1, ORC2 and ORC6.

It localises to the cytoplasm. The protein resides in the nucleus. Its function is as follows. DNA replication licensing factor, required for pre-replication complex assembly. Faithful duplication of the genetic material requires 'once per cell cycle' DNA replication initiation and elongation. Central to this control is the tightly regulated formation of prereplicative complexes (preRCs) at future origins of DNA replication. Required for the recruitment of the MCM2-7 helicase complex to the replication origins. This chain is Cell division cycle protein CDT1 (TAH11), found in Saccharomyces cerevisiae (strain ATCC 204508 / S288c) (Baker's yeast).